Consider the following 322-residue polypeptide: Ferredoxin--NADP reductase (322 aa).

FAD-binding residues include aspartate 34, glutamine 42, tyrosine 47, valine 87, phenylalanine 120, aspartate 279, and threonine 320.

Belongs to the ferredoxin--NADP reductase type 2 family. Homodimer. Requires FAD as cofactor.

The catalysed reaction is 2 reduced [2Fe-2S]-[ferredoxin] + NADP(+) + H(+) = 2 oxidized [2Fe-2S]-[ferredoxin] + NADPH. This chain is Ferredoxin--NADP reductase, found in Streptococcus gordonii (strain Challis / ATCC 35105 / BCRC 15272 / CH1 / DL1 / V288).